Consider the following 263-residue polypeptide: Chromosomal replication initiator protein DnaA (263 aa).

Residue aspartate 1 is a region of interest, domain I, interacts with DnaA modulators. Residue aspartate 1 is a region of interest, domain II. A domain III, AAA+ region region spans residues 1–177 (DSGLGKTHLL…GIINKIEFSI (177 aa)). Residues glycine 3, glycine 5, lysine 6, and threonine 7 each contribute to the ATP site. Residues 178 to 263 (IQDNSAAPKI…KNYSEIGVAF (86 aa)) form a domain IV, binds dsDNA region.

Belongs to the DnaA family. Oligomerizes as a right-handed, spiral filament on DNA at oriC.

Its subcellular location is the cytoplasm. Functionally, plays an essential role in the initiation and regulation of chromosomal replication. ATP-DnaA binds to the origin of replication (oriC) to initiate formation of the DNA replication initiation complex once per cell cycle. Binds the DnaA box (a 9 base pair repeat at the origin) and separates the double-stranded (ds)DNA. Forms a right-handed helical filament on oriC DNA; dsDNA binds to the exterior of the filament while single-stranded (ss)DNA is stabiized in the filament's interior. The ATP-DnaA-oriC complex binds and stabilizes one strand of the AT-rich DNA unwinding element (DUE), permitting loading of DNA polymerase. After initiation quickly degrades to an ADP-DnaA complex that is not apt for DNA replication. Binds acidic phospholipids. The chain is Chromosomal replication initiator protein DnaA from Spiroplasma apis.